Reading from the N-terminus, the 330-residue chain is GTPase Obg (330 aa).

One can recognise an Obg domain in the interval 1 to 159; the sequence is MNFIDEVKIC…MWIHLSLKLL (159 aa). Positions 160-327 constitute an OBG-type G domain; sequence SDVGLVGLPN…IVKLALKTIK (168 aa). Residues 166–173, 191–195, 212–215, 279–282, and 308–310 each bind GTP; these read GLPNAGKS, FTTLV, DIPG, NKCD, and STY. Mg(2+) contacts are provided by Ser173 and Thr193.

Belongs to the TRAFAC class OBG-HflX-like GTPase superfamily. OBG GTPase family. In terms of assembly, monomer. The cofactor is Mg(2+).

The protein localises to the cytoplasm. An essential GTPase which binds GTP, GDP and possibly (p)ppGpp with moderate affinity, with high nucleotide exchange rates and a fairly low GTP hydrolysis rate. Plays a role in control of the cell cycle, stress response, ribosome biogenesis and in those bacteria that undergo differentiation, in morphogenesis control. This Rickettsia felis (strain ATCC VR-1525 / URRWXCal2) (Rickettsia azadi) protein is GTPase Obg.